Consider the following 699-residue polypeptide: tRNA 5-methylaminomethyl-2-thiouridine biosynthesis bifunctional protein MnmC (699 aa).

Residues 1-260 form a tRNA (mnm(5)s(2)U34)-methyltransferase region; the sequence is MTAKPQKSCQ…ERKLLRQQAD (260 aa). The segment at 282–699 is FAD-dependent cmnm(5)s(2)U34 oxidoreductase; sequence VGGGLASANL…LRKLLKGKAL (418 aa).

It in the N-terminal section; belongs to the methyltransferase superfamily. tRNA (mnm(5)s(2)U34)-methyltransferase family. The protein in the C-terminal section; belongs to the DAO family. FAD is required as a cofactor.

It localises to the cytoplasm. It carries out the reaction 5-aminomethyl-2-thiouridine(34) in tRNA + S-adenosyl-L-methionine = 5-methylaminomethyl-2-thiouridine(34) in tRNA + S-adenosyl-L-homocysteine + H(+). In terms of biological role, catalyzes the last two steps in the biosynthesis of 5-methylaminomethyl-2-thiouridine (mnm(5)s(2)U) at the wobble position (U34) in tRNA. Catalyzes the FAD-dependent demodification of cmnm(5)s(2)U34 to nm(5)s(2)U34, followed by the transfer of a methyl group from S-adenosyl-L-methionine to nm(5)s(2)U34, to form mnm(5)s(2)U34. The sequence is that of tRNA 5-methylaminomethyl-2-thiouridine biosynthesis bifunctional protein MnmC from Shewanella sp. (strain MR-4).